The chain runs to 225 residues: Uracil-DNA glycosylase (225 aa).

The Proton acceptor role is filled by Asp-65.

It belongs to the uracil-DNA glycosylase (UDG) superfamily. UNG family.

The protein localises to the cytoplasm. It carries out the reaction Hydrolyzes single-stranded DNA or mismatched double-stranded DNA and polynucleotides, releasing free uracil.. In terms of biological role, excises uracil residues from the DNA which can arise as a result of misincorporation of dUMP residues by DNA polymerase or due to deamination of cytosine. The polypeptide is Uracil-DNA glycosylase (Anoxybacillus flavithermus (strain DSM 21510 / WK1)).